The chain runs to 213 residues: Urease accessory protein UreG (213 aa).

10 to 17 contacts GTP; the sequence is GPVGSGKT.

It belongs to the SIMIBI class G3E GTPase family. UreG subfamily. Homodimer. UreD, UreF and UreG form a complex that acts as a GTP-hydrolysis-dependent molecular chaperone, activating the urease apoprotein by helping to assemble the nickel containing metallocenter of UreC. The UreE protein probably delivers the nickel.

The protein localises to the cytoplasm. In terms of biological role, facilitates the functional incorporation of the urease nickel metallocenter. This process requires GTP hydrolysis, probably effectuated by UreG. The chain is Urease accessory protein UreG from Deinococcus radiodurans (strain ATCC 13939 / DSM 20539 / JCM 16871 / CCUG 27074 / LMG 4051 / NBRC 15346 / NCIMB 9279 / VKM B-1422 / R1).